Here is a 194-residue protein sequence, read N- to C-terminus: Imidazoleglycerol-phosphate dehydratase (194 aa).

The protein belongs to the imidazoleglycerol-phosphate dehydratase family.

The protein localises to the cytoplasm. The enzyme catalyses D-erythro-1-(imidazol-4-yl)glycerol 3-phosphate = 3-(imidazol-4-yl)-2-oxopropyl phosphate + H2O. Its pathway is amino-acid biosynthesis; L-histidine biosynthesis; L-histidine from 5-phospho-alpha-D-ribose 1-diphosphate: step 6/9. In Lacticaseibacillus paracasei (strain ATCC 334 / BCRC 17002 / CCUG 31169 / CIP 107868 / KCTC 3260 / NRRL B-441) (Lactobacillus paracasei), this protein is Imidazoleglycerol-phosphate dehydratase.